Here is a 192-residue protein sequence, read N- to C-terminus: Cytidylate kinase (192 aa).

Residue 12–20 (GLAGSGTTT) coordinates ATP.

It belongs to the cytidylate kinase family. Type 2 subfamily.

The protein resides in the cytoplasm. The catalysed reaction is CMP + ATP = CDP + ADP. The enzyme catalyses dCMP + ATP = dCDP + ADP. The protein is Cytidylate kinase of Pyrococcus furiosus (strain ATCC 43587 / DSM 3638 / JCM 8422 / Vc1).